We begin with the raw amino-acid sequence, 2586 residues long: Highly reducing polyketide synthase FUM1 (2586 aa).

The 423-residue stretch at 29–451 folds into the Ketosynthase family 3 (KS3) domain; that stretch reads VLPVAIVGMG…GANAHCIIET (423 aa). Active-site for beta-ketoacyl synthase activity residues include cysteine 201, histidine 336, and histidine 374. Residues 609-928 form a malonyl-CoA:ACP transacylase (MAT) domain region; that stretch reads IFTGQGAQWV…TESLLKLAGE (320 aa). The N-terminal hotdog fold stretch occupies residues 980–1111; sequence HELLGSRTLE…GQVRPGQDAH (132 aa). The interval 980 to 1269 is dehydratase (DH) domain; that stretch reads HELLGSRTLE…LEDGKFSPLE (290 aa). The PKS/mFAS DH domain maps to 980-1274; it reads HELLGSRTLE…FSPLEMDLAE (295 aa). The active-site Proton acceptor; for dehydratase activity is the histidine 1012. A C-terminal hotdog fold region spans residues 1125-1274; that stretch reads QHYPRLVDNL…FSPLEMDLAE (150 aa). Catalysis depends on aspartate 1186, which acts as the Proton donor; for dehydratase activity. The segment at 1450–1627 is methyltransferase (CMet) domain; sequence DFFATAGHTR…GFSGVDSAIY (178 aa). An enoyl reductase (ER) (ER) domain region spans residues 1862-2172; the sequence is GLLQTLGWVP…KGVHLGKIVV (311 aa). The interval 2197–2373 is ketoreductase (KR) domain; the sequence is ASYLLVGGLG…ASVLQIGLIE (177 aa). A Carrier domain is found at 2486-2565; sequence PATVELVTNE…GLARLTVDGL (80 aa). Serine 2524 bears the O-(pantetheine 4'-phosphoryl)serine mark.

The protein operates within mycotoxin biosynthesis. In terms of biological role, highly reducing polyketide synthase; part of the gene cluster that mediates the biosynthesis of fumonisins B1 (FB1), B2 (FB2), B3 (FB3), and B4 (FB4), which are carcinogenic mycotoxins. The biosynthesis starts with the FUM1-catalyzed carbon chain assembly from one molecule of acetyl-CoA, eight molecules of malonyl-CoA, and two molecules of methionine (in S-adenosyl form). The C18 polyketide chain is released from the enzyme by a nucleophilic attack of a carbanion, which is derived from R-carbon of alanine by decarboxylation, on the carbonyl carbon of polyketide acyl chain. This step is catalyzed by the pyridoxal 5'-phosphate-dependent aminoacyl transferase FUM8. The resultant 3-keto intermediate is then stereospecifically reduced to a 3-hydroxyl product by reductase FUM13. Subsequent oxidations at C-10 by the cytochrome P450 monooxygenase FUM2, C-14 and C-15 by FUM6, FUM12 or FUM15, tricarballylic esterification of the hydroxyl groups on C-14 and C-15 by acyltransferase FUM14, and C-5 hydroxylation by 2-keto-glutarate-dependent dioxygenase FUM3 furnish the biosynthesis of fumonisins. The tricarballylic moieties are most likely derived from the citric acid cycle, and their addition to the carbon backbone may involve FUM7, FUM10, FUM11 and FUM14. This Gibberella moniliformis (strain M3125 / FGSC 7600) (Maize ear and stalk rot fungus) protein is Highly reducing polyketide synthase FUM1.